The primary structure comprises 229 residues: 2,3-bisphosphoglycerate-dependent phosphoglycerate mutase (229 aa).

Substrate contacts are provided by residues 7–14 (RHGQSEWN), 20–21 (TG), Arg-59, 86–89 (ERHY), Lys-97, 113–114 (RR), and 182–183 (GN). The active-site Tele-phosphohistidine intermediate is His-8. The active-site Proton donor/acceptor is the Glu-86.

The protein belongs to the phosphoglycerate mutase family. BPG-dependent PGAM subfamily.

The enzyme catalyses (2R)-2-phosphoglycerate = (2R)-3-phosphoglycerate. It participates in carbohydrate degradation; glycolysis; pyruvate from D-glyceraldehyde 3-phosphate: step 3/5. Its function is as follows. Catalyzes the interconversion of 2-phosphoglycerate and 3-phosphoglycerate. The sequence is that of 2,3-bisphosphoglycerate-dependent phosphoglycerate mutase from Listeria innocua serovar 6a (strain ATCC BAA-680 / CLIP 11262).